The primary structure comprises 171 residues: Co-chaperone protein HscB (171 aa).

The region spanning 2–74 is the J domain; sequence DYFTLFGLPA…LTRAEYLLSL (73 aa).

This sequence belongs to the HscB family. As to quaternary structure, interacts with HscA and stimulates its ATPase activity. Interacts with IscU.

Co-chaperone involved in the maturation of iron-sulfur cluster-containing proteins. Seems to help targeting proteins to be folded toward HscA. This chain is Co-chaperone protein HscB, found in Salmonella agona (strain SL483).